The following is a 309-amino-acid chain: Cytidine deaminase (309 aa).

CMP/dCMP-type deaminase domains follow at residues 48-168 (DEDA…FGPR) and 200-309 (DDND…SLSL). 89–91 (NME) is a binding site for substrate. Residue His102 coordinates Zn(2+). Glu104 functions as the Proton donor in the catalytic mechanism. The Zn(2+) site is built by Cys129 and Cys132.

Belongs to the cytidine and deoxycytidylate deaminase family. As to quaternary structure, homodimer. It depends on Zn(2+) as a cofactor.

The catalysed reaction is cytidine + H2O + H(+) = uridine + NH4(+). The enzyme catalyses 2'-deoxycytidine + H2O + H(+) = 2'-deoxyuridine + NH4(+). Its function is as follows. This enzyme scavenges exogenous and endogenous cytidine and 2'-deoxycytidine for UMP synthesis. The protein is Cytidine deaminase of Sodalis glossinidius (strain morsitans).